A 75-amino-acid chain; its full sequence is Large ribosomal subunit protein bL31 (75 aa).

The protein belongs to the bacterial ribosomal protein bL31 family. Type A subfamily. In terms of assembly, part of the 50S ribosomal subunit.

In terms of biological role, binds the 23S rRNA. The chain is Large ribosomal subunit protein bL31 from Sphingopyxis alaskensis (strain DSM 13593 / LMG 18877 / RB2256) (Sphingomonas alaskensis).